The sequence spans 258 residues: Hydroxyacylglutathione hydrolase (258 aa).

Histidine 56, histidine 58, aspartate 60, histidine 61, histidine 112, aspartate 132, and histidine 170 together coordinate Zn(2+).

It belongs to the metallo-beta-lactamase superfamily. Glyoxalase II family. As to quaternary structure, monomer. Zn(2+) serves as cofactor.

It catalyses the reaction an S-(2-hydroxyacyl)glutathione + H2O = a 2-hydroxy carboxylate + glutathione + H(+). The protein operates within secondary metabolite metabolism; methylglyoxal degradation; (R)-lactate from methylglyoxal: step 2/2. In terms of biological role, thiolesterase that catalyzes the hydrolysis of S-D-lactoyl-glutathione to form glutathione and D-lactic acid. The protein is Hydroxyacylglutathione hydrolase of Pseudomonas aeruginosa (strain ATCC 15692 / DSM 22644 / CIP 104116 / JCM 14847 / LMG 12228 / 1C / PRS 101 / PAO1).